A 171-amino-acid chain; its full sequence is MAKGSANNVKVNQDAGKSQPEKKENKDFQYIVRIANKDLNGERLLPLALSDLKGIGERLGYVIAERLDLPIDKKIGELKEEQLEKLREYVEAKEYDLPEWLLNHRREPVTGKNLNLVSTDLEIQVQEDINLMKKIRSYKGIRHEKGKKVRGQRTRSNGRKGLSIGVVRKKE.

Residues 1–11 show a composition bias toward polar residues; sequence MAKGSANNVKV. Disordered stretches follow at residues 1-24 and 144-164; these read MAKG…EKKE and EKGK…GLSI. Residues 144 to 158 show a composition bias toward basic residues; sequence EKGKKVRGQRTRSNG.

This sequence belongs to the universal ribosomal protein uS13 family. In terms of assembly, part of the 30S ribosomal subunit. Forms a loose heterodimer with protein S19. Forms two bridges to the 50S subunit in the 70S ribosome.

Located at the top of the head of the 30S subunit, it contacts several helices of the 16S rRNA. In the 70S ribosome it contacts the 23S rRNA (bridge B1a) and protein L5 of the 50S subunit (bridge B1b), connecting the 2 subunits; these bridges are implicated in subunit movement. This chain is Small ribosomal subunit protein uS13, found in Thermoplasma acidophilum (strain ATCC 25905 / DSM 1728 / JCM 9062 / NBRC 15155 / AMRC-C165).